The sequence spans 56 residues: Large ribosomal subunit protein bL32 (56 aa).

Positions 1–16 are enriched in basic residues; it reads MAVQKSKKSRSRRDMR. Positions 1–56 are disordered; that stretch reads MAVQKSKKSRSRRDMRRSHDAIDGPTLSVDSTTGETHRRHHVTADGYYKGRKVVNK.

This sequence belongs to the bacterial ribosomal protein bL32 family.

In Idiomarina loihiensis (strain ATCC BAA-735 / DSM 15497 / L2-TR), this protein is Large ribosomal subunit protein bL32.